We begin with the raw amino-acid sequence, 23 residues long: Toxin Acra2 (23 aa).

The region spanning 2 to 23 (KDGYIVDSNGCAPECFPTNXGC) is the LCN-type CS-alpha/beta domain.

Contains 4 disulfide bonds. Expressed by the venom gland.

The protein resides in the secreted. Excitatory insect toxins induce a spastic paralysis. They bind voltage-independently at site-4 of sodium channels (Nav) and shift the voltage of activation toward more negative potentials thereby affecting sodium channel activation and promoting spontaneous and repetitive firing. Is lethal to mice. Is about 1% of the total protein in the venom. This is Toxin Acra2 from Androctonus crassicauda (Arabian fat-tailed scorpion).